Here is a 506-residue protein sequence, read N- to C-terminus: Probable cytosol aminopeptidase (506 aa).

The Mn(2+) site is built by lysine 278 and aspartate 283. Lysine 290 is a catalytic residue. Positions 301, 360, and 362 each coordinate Mn(2+). The active site involves arginine 364.

This sequence belongs to the peptidase M17 family. It depends on Mn(2+) as a cofactor.

It localises to the cytoplasm. The catalysed reaction is Release of an N-terminal amino acid, Xaa-|-Yaa-, in which Xaa is preferably Leu, but may be other amino acids including Pro although not Arg or Lys, and Yaa may be Pro. Amino acid amides and methyl esters are also readily hydrolyzed, but rates on arylamides are exceedingly low.. It catalyses the reaction Release of an N-terminal amino acid, preferentially leucine, but not glutamic or aspartic acids.. Functionally, presumably involved in the processing and regular turnover of intracellular proteins. Catalyzes the removal of unsubstituted N-terminal amino acids from various peptides. This is Probable cytosol aminopeptidase from Ralstonia nicotianae (strain ATCC BAA-1114 / GMI1000) (Ralstonia solanacearum).